A 474-amino-acid chain; its full sequence is MTKKLHIKTWGCQMNEYDSSKMADLLGSTHGYQWTDNAEEADVLLLNTCSIREKAQEKVFAMLGRWRLLKEKNPALIIGVGGCVASQEGEHIRSRAPCVDVVFGPQTLHRLPEMLNHVQGTRSPIVDISFPEIEKFDRLPEPRAEGPTAFVSIMEGCNKYCTFCVVPYTRGEEVSRPSDDVLFEVAQLAAQGVREVNLLGQNVNAYRGATYDGGICSFAELLRLVAAIDGIDRIRYTTSHPIEFTDDIIAVYEDTPELVSFLHLPVQSGSDRILTMMKRAHTALEYKAIIRKLRKARPDIQLSSDFIIGFPGETQADFEQTMNLIAEINFDTSFSFIYSSRPGTPAADMVDDVSEDEKKQRLYILQDRINQQVLQFSRRMLGTVQRILVEGTSRKSVMELAGRTACNRMVNFEGTPDMIGQFVDVEITEVLTNSLRGTVVRTEQQMDLRVHESPQSVIARTRKENALGVGIYQP.

One can recognise an MTTase N-terminal domain in the interval 3-120 (KKLHIKTWGC…LPEMLNHVQG (118 aa)). [4Fe-4S] cluster is bound by residues cysteine 12, cysteine 49, cysteine 83, cysteine 157, cysteine 161, and cysteine 164. Residues 143–375 (RAEGPTAFVS…QDRINQQVLQ (233 aa)) form the Radical SAM core domain. Positions 378 to 441 (RRMLGTVQRI…TNSLRGTVVR (64 aa)) constitute a TRAM domain.

Belongs to the methylthiotransferase family. MiaB subfamily. In terms of assembly, monomer. [4Fe-4S] cluster is required as a cofactor.

It is found in the cytoplasm. The catalysed reaction is N(6)-dimethylallyladenosine(37) in tRNA + (sulfur carrier)-SH + AH2 + 2 S-adenosyl-L-methionine = 2-methylsulfanyl-N(6)-dimethylallyladenosine(37) in tRNA + (sulfur carrier)-H + 5'-deoxyadenosine + L-methionine + A + S-adenosyl-L-homocysteine + 2 H(+). Functionally, catalyzes the methylthiolation of N6-(dimethylallyl)adenosine (i(6)A), leading to the formation of 2-methylthio-N6-(dimethylallyl)adenosine (ms(2)i(6)A) at position 37 in tRNAs that read codons beginning with uridine. In Serratia proteamaculans (strain 568), this protein is tRNA-2-methylthio-N(6)-dimethylallyladenosine synthase.